Reading from the N-terminus, the 269-residue chain is Shikimate dehydrogenase (NADP(+)) (269 aa).

Residues 17–19 and Thr-64 each bind shikimate; that span reads SKS. Lys-68 acts as the Proton acceptor in catalysis. Glu-80 is an NADP(+) binding site. Shikimate contacts are provided by Asn-89 and Asp-105. NADP(+) is bound by residues 130-134, 154-159, and Met-213; these read GAGGA and NRTHTK. Residue Tyr-215 coordinates shikimate. Gly-237 lines the NADP(+) pocket.

Belongs to the shikimate dehydrogenase family. Homodimer.

It carries out the reaction shikimate + NADP(+) = 3-dehydroshikimate + NADPH + H(+). It functions in the pathway metabolic intermediate biosynthesis; chorismate biosynthesis; chorismate from D-erythrose 4-phosphate and phosphoenolpyruvate: step 4/7. Involved in the biosynthesis of the chorismate, which leads to the biosynthesis of aromatic amino acids. Catalyzes the reversible NADPH linked reduction of 3-dehydroshikimate (DHSA) to yield shikimate (SA). This Neisseria mucosa protein is Shikimate dehydrogenase (NADP(+)).